Reading from the N-terminus, the 317-residue chain is Methionyl-tRNA formyltransferase (317 aa).

109–112 (SLLP) serves as a coordination point for (6S)-5,6,7,8-tetrahydrofolate.

This sequence belongs to the Fmt family.

It carries out the reaction L-methionyl-tRNA(fMet) + (6R)-10-formyltetrahydrofolate = N-formyl-L-methionyl-tRNA(fMet) + (6S)-5,6,7,8-tetrahydrofolate + H(+). Its function is as follows. Attaches a formyl group to the free amino group of methionyl-tRNA(fMet). The formyl group appears to play a dual role in the initiator identity of N-formylmethionyl-tRNA by promoting its recognition by IF2 and preventing the misappropriation of this tRNA by the elongation apparatus. The chain is Methionyl-tRNA formyltransferase from Desulforamulus reducens (strain ATCC BAA-1160 / DSM 100696 / MI-1) (Desulfotomaculum reducens).